A 73-amino-acid polypeptide reads, in one-letter code: MKFLFLTLFVCCFIAVLVIPSEAQIDINVSCRYGSDCAEPCKRLKCLLPSKCINGKCTCYPSIKIKNCKVQTY.

The first 23 residues, M1–A23, serve as a signal peptide directing secretion.

This sequence belongs to the short scorpion toxin superfamily. Potassium channel inhibitor family. Alpha-KTx 27 subfamily. Post-translationally, contains 4 disulfide bonds. In terms of tissue distribution, expressed by the venom gland.

The protein resides in the secreted. This Buthus israelis (Israeli scorpion) protein is Potassium channel toxin alpha-KTx 27.1.